Reading from the N-terminus, the 179-residue chain is Fimbrial subunit ElfA (179 aa).

Residues 1–21 (MKKSVLTAFITVVCATSSVMA) form the signal peptide.

Belongs to the fimbrial protein family.

The protein resides in the fimbrium. In terms of biological role, part of the elfADCG-ycbUVF fimbrial operon, which promotes adhesion of bacteria to different abiotic surfaces. ElfA is the major fimbrial subunit produced by this operon. This chain is Fimbrial subunit ElfA (elfA), found in Escherichia coli (strain K12).